A 152-amino-acid chain; its full sequence is Transcriptional regulator MraZ (152 aa).

2 consecutive SpoVT-AbrB domains span residues 5-52 and 81-124; these read ATLV…PLPE and ASEC…DETT.

Belongs to the MraZ family. As to quaternary structure, forms oligomers.

Its subcellular location is the cytoplasm. It localises to the nucleoid. Negatively regulates its own expression and that of the subsequent genes in the proximal part of the division and cell wall (dcw) gene cluster. Acts by binding directly to DNA. May also regulate the expression of genes outside the dcw cluster. In Salmonella typhi, this protein is Transcriptional regulator MraZ.